Consider the following 136-residue polypeptide: MSLQISILTPEKPFWNGQAEEIILPTETGEMGVLKNHAPIITGLDVGAMLVRTKEEWNSYALMGGFAVVKKNKVTILANEAESAETIDAEEAKNAFEIAKGNLEKAEGVKQKVEANFAYKRAKARFQVVKVVNKYS.

It belongs to the ATPase epsilon chain family. F-type ATPases have 2 components, CF(1) - the catalytic core - and CF(0) - the membrane proton channel. CF(1) has five subunits: alpha(3), beta(3), gamma(1), delta(1), epsilon(1). CF(0) has three main subunits: a, b and c.

The protein localises to the plastid. Its subcellular location is the chloroplast thylakoid membrane. Produces ATP from ADP in the presence of a proton gradient across the membrane. In Tetradesmus obliquus (Green alga), this protein is ATP synthase epsilon chain, chloroplastic.